A 286-amino-acid chain; its full sequence is Versiconal hemiacetal acetate esterase stcI (286 aa).

Residues 54-56 (HAG) carry the Involved in the stabilization of the negatively charged intermediate by the formation of the oxyanion hole motif. Catalysis depends on residues Ser123, Asp226, and His256.

Belongs to the 'GDXG' lipolytic enzyme family.

The enzyme catalyses (2S,3S)-versiconal hemiacetal acetate + H2O = (2S-3S)-versiconal hemiacetal + acetate + H(+). It catalyses the reaction (3S)-versiconol acetate + H2O = (S)-versiconol + acetate + H(+). It functions in the pathway mycotoxin biosynthesis; sterigmatocystin biosynthesis. In terms of biological role, esterase; part of the gene cluster that mediates the biosynthesis of sterigmatocystin (ST), a polyketide-derived furanocoumarin which is part of the most toxic and carcinogenic compounds among the known mycotoxins. The first step in the biosynthesis of sterigmatocystin is the production of hexanoate by the fatty acid synthase (FAS) units stcJ and stcK. The polyketide backbone is assembled by the non-reducing polyketide synthase stcA by condensation of the starter hexanoyl-CoA and 7 malonyl-CoA extender units followed by cyclization and release of norsolorinic acid. Norsolorinic acid is the first stable intermediate in the biosynthesis of sterigmatocystin and is converted into averantin (AVN) by the ketoreductase stcE which reduces the hexanoate ketone to an alcohol. Averantin is then oxidized into 5'-hydroxyaverantin (HAVN) by the cytochrome P450 monooxygenase stcF. 5'-hydroxyaverantin is further converted to 5'-oxyaverantin (OAVN) by the 5'-hydroxyaverantin dehydrogenase stcG. The next step is the conversion of OAVN into averufin (AVF) which is catalyzed by a yet to be identified enzyme. The cytochrome P450 monooxygenase stcB and the flavin-binding monooxygenase stcW are both required for the conversion of averufin to 1-hydroxyversicolorone. The esterase stcI probably catalyzes the formation of versiconal hemiacetal acetate from 1-hydroxyversicolorone. The oxydoreductase stcN then probably catalyzes the biosynthetic step from versiconal to versicolorin B (VERB). The next step is performed by the versicolorin B desaturase stcL to produce versicolorin A (VERA). The ketoreductase stcU and the cytochrome P450 monooxygenase stcS are involved in the conversion of versicolorin A to demethylsterigmatocystin. The Baeyer-Villiger oxidas stcQ and the reductase stcR might be involved in the biosynthetic step from versicolorin A to demethylsterigmatocystin. The final step in the biosynthesis of sterigmatocystin is the methylation of demethylsterigmatocystin catalyzed by the methyltransferase stcP. This Emericella nidulans (strain FGSC A4 / ATCC 38163 / CBS 112.46 / NRRL 194 / M139) (Aspergillus nidulans) protein is Versiconal hemiacetal acetate esterase stcI.